A 1033-amino-acid chain; its full sequence is E3 ubiquitin-protein ligase Topors (1033 aa).

The segment covering 1-10 has biased composition (pro residues); sequence MGSQPPPPGS. The segment at 1–36 is disordered; that stretch reads MGSQPPPPGSPLSREEGEAPPLVPAEEGRRRSRRVR. Positions 52–376 are required for DNA-binding; sequence ELASNGPAVP…MAAFDQHANY (325 aa). Glycyl lysine isopeptide (Lys-Gly) (interchain with G-Cter in SUMO2) cross-links involve residues Lys74, Lys77, Lys84, and Lys89. Residue Ser99 is modified to Phosphoserine. The RING-type zinc-finger motif lies at 104–143; it reads CPICLDRFDNVSYLDRCLHKFCFRCVQEWSKNKAECPLCK. A Glycyl lysine isopeptide (Lys-Gly) (interchain with G-Cter in SUMO2) cross-link involves residue Lys160. Position 196 is a phosphoserine (Ser196). A Glycyl lysine isopeptide (Lys-Gly) (interchain with G-Cter in SUMO2) cross-link involves residue Lys251. Disordered regions lie at residues 414 to 477 and 496 to 692; these read QAPW…SSSD and VELS…RYYL. Over residues 434-444 the composition is skewed to low complexity; it reads VGVSSLLNSSD. The sumoylation and localization to discrete nuclear foci stretch occupies residues 438–574; that stretch reads SLLNSSDSSD…RSTSLPAPRD (137 aa). The interval 438–654 is interaction with SUMO1; sequence SLLNSSDSSD…RSRTRDSSWS (217 aa). Over residues 455-464 the composition is skewed to polar residues; the sequence is TTSQIQGVQT. The interaction with p53/TP53 stretch occupies residues 457–731; the sequence is SQIQGVQTND…RRTLSRAHYS (275 aa). Residues 457–879 form an interaction with TOP1 region; sequence SQIQGVQTND…GKATDTSKHH (423 aa). The segment covering 465–477 has biased composition (low complexity); that stretch reads NDDVNNDSDSSSD. Ser500 carries the phosphoserine modification. The segment covering 507 to 518 has biased composition (basic and acidic residues); it reads PYEKVETVKTQE. Positions 522–535 are enriched in low complexity; it reads SYSSGDSDVSRASS. Basic and acidic residues predominate over residues 540 to 566; the sequence is LGKDEQMSKSHCDSDTRISSKKEEKRS. Residue Lys561 forms a Glycyl lysine isopeptide (Lys-Gly) (interchain with G-Cter in SUMO) linkage. The residue at position 585 (Ser585) is a Phosphoserine. 2 stretches are compositionally biased toward basic residues: residues 613-629 and 637-647; these read RNHR…KRSR and PRARKDKKRSR. The segment covering 654–669 has biased composition (low complexity); sequence SRRSQTLSLSSGSTSR. A Glycyl lysine isopeptide (Lys-Gly) (interchain with G-Cter in SUMO2) cross-link involves residue Lys701. Disordered stretches follow at residues 713–934 and 970–1033; these read RDGY…PIQD and TVEN…CDVS. The residue at position 718 (Ser718) is a Phosphoserine; by PLK1. The segment covering 721–730 has biased composition (basic residues); sequence RRRTLSRAHY. Polar residues predominate over residues 731 to 747; the sequence is SRQSSSPEFRIQSFSER. Ser734 carries the post-translational modification Phosphoserine. Residues 770-780 show a composition bias toward low complexity; the sequence is SVSSNRSRTTS. Residues 815 to 837 show a composition bias toward basic and acidic residues; it reads FTSKGKDSHYQKSKLDGSYKNES. Glycyl lysine isopeptide (Lys-Gly) (interchain with G-Cter in SUMO2) cross-links involve residues Lys818 and Lys834. A compositionally biased stretch (basic residues) spans 851–860; the sequence is KHKRRRRRTR. The interval 851-914 is interaction with UBE2I; the sequence is KHKRRRRRTR…ITIDSDSDGE (64 aa). Residues Ser861 and Ser863 each carry the phosphoserine modification. Positions 877-894 are enriched in basic residues; that stretch reads KHHKKKKKKHKKKHKKHH. Phosphoserine occurs at positions 909, 911, 999, 1016, and 1025. The segment covering 992-1008 has biased composition (polar residues); sequence TFASDLESQSSNVSIQA.

Interacts with TOP1. Interacts with the SUMO1 conjugating enzyme UBE2I. Interacts with SUMO1. Interacts with NKX3-1; polyubiquitinates NKX3-1 and induces its proteasomal degradation. Interacts with SIN3A; sumoylates SIN3A. Interacts with IKBKE; induced by DNA damage. Interacts with p53/TP53. Interacts with PARK7/DJ-1. In terms of processing, phosphorylation at Ser-99 regulates the E3 ubiquitin-protein ligase activity but not the SUMO1-protein ligase activity. Phosphorylation at Ser-718 increases the E3 ubiquitin-protein ligase activity versus the E3 SUMO1-protein ligase activity resulting in increased p53/TP53 ubiquitination and degradation. Sumoylated.

It localises to the nucleus. The protein localises to the PML body. The catalysed reaction is S-ubiquitinyl-[E2 ubiquitin-conjugating enzyme]-L-cysteine + [acceptor protein]-L-lysine = [E2 ubiquitin-conjugating enzyme]-L-cysteine + N(6)-ubiquitinyl-[acceptor protein]-L-lysine.. In terms of biological role, functions as an E3 ubiquitin-protein ligase and as a E3 SUMO1-protein ligase. Probable tumor suppressor involved in cell growth, cell proliferation and apoptosis that regulates p53/TP53 stability through ubiquitin-dependent degradation. May regulate chromatin modification through sumoylation of several chromatin modification-associated proteins. May be involved in DNA-damage-induced cell death through IKBKE sumoylation. This is E3 ubiquitin-protein ligase Topors (Topors) from Mus musculus (Mouse).